Consider the following 274-residue polypeptide: Remorin 4.2 (274 aa).

The segment covering 1-30 has biased composition (basic and acidic residues); it reads MLTLYHQERSPDATSNDRDETPETVVREVH. 3 disordered regions span residues 1–71, 117–157, and 218–245; these read MLTL…EGEN, TDHE…TVQR, and AMEK…AKRG. 2 stretches are compositionally biased toward polar residues: residues 61–71 and 145–156; these read RSATTMSEGEN and GPGQSRVGSTVQ. Residues 204-239 adopt a coiled-coil conformation; sequence MKKIERKLEERKAKAMEKTQNNVAKAQRKAEERRAT. The span at 231–245 shows a compositional bias: basic and acidic residues; it reads RKAEERRATAEAKRG.

The protein belongs to the remorin family. Forms homodimer and heterodimer with REM4.1. Interacts with KIN11. Post-translationally, probably ubiquitinated and degraded by the 26S proteasome pathway. In terms of tissue distribution, predominantly detected in bud, stem, root, flower, silique, and leaves, and enhanced dramatically in senescence leaf.

The protein resides in the cell membrane. Its function is as follows. Collaborates with REM4.1 to positively regulate the BCTV and BSCTV susceptibility. This is Remorin 4.2 from Arabidopsis thaliana (Mouse-ear cress).